Reading from the N-terminus, the 230-residue chain is Protein CWC15 homolog B (230 aa).

The tract at residues 1-126 (MTTAARPTFE…DEDSDDDTAA (126 aa)) is disordered. The span at 22–34 (DLSQLSKQYSSRD) shows a compositional bias: polar residues. The segment covering 52–84 (EEVRSRDFRRELEERERVAVRDKNRDRPTREHT) has biased composition (basic and acidic residues). The span at 102–124 (DADDPLTDEDADEDSDEDSDDDT) shows a compositional bias: acidic residues. A coiled-coil region spans residues 121-165 (DDDTAALLAELEKIKKERAEEQVRKELEQKAEEERIRMENILSGN).

Belongs to the CWC15 family. Identified in the spliceosome C complex. Component of the minor spliceosome, which splices U12-type introns.

It localises to the nucleus. Involved in pre-mRNA splicing as component of the spliceosome. The protein is Protein CWC15 homolog B (cwc15-b) of Xenopus laevis (African clawed frog).